The primary structure comprises 207 residues: Large ribosomal subunit protein uL4 (207 aa).

Positions 52–76 (KNTSLVSGGGKKPWKQKGTGRARQG) are disordered.

This sequence belongs to the universal ribosomal protein uL4 family. As to quaternary structure, part of the 50S ribosomal subunit.

Functionally, one of the primary rRNA binding proteins, this protein initially binds near the 5'-end of the 23S rRNA. It is important during the early stages of 50S assembly. It makes multiple contacts with different domains of the 23S rRNA in the assembled 50S subunit and ribosome. Its function is as follows. Forms part of the polypeptide exit tunnel. The sequence is that of Large ribosomal subunit protein uL4 from Myxococcus xanthus (strain DK1622).